A 196-amino-acid polypeptide reads, in one-letter code: Mitochondrial inner membrane protein SHH3 (196 aa).

A mitochondrion-targeting transit peptide spans Met1–Lys53. Over Ser54–Ser97 the chain is Mitochondrial matrix. A ubiquinone-binding residues include Ser91 and Arg95. The helical transmembrane segment at Gly98–Met118 threads the bilayer. The Mitochondrial intermembrane portion of the chain corresponds to Gly119–Lys137. The chain crosses the membrane as a helical span at residues Trp138–Arg160. His154 is a heme binding site. The Mitochondrial matrix segment spans residues His161–Gly174. A helical transmembrane segment spans residues Val175–Ala195. Position 196 (Gln196) is a topological domain, mitochondrial intermembrane.

The protein belongs to the cytochrome b560 family.

It localises to the mitochondrion inner membrane. Its function is as follows. Homolog of SDH3, but seems not to be a stoichiometric subunit of either the succinate dehydrogenase (SDH) complex or the mitochondrial inner membrane translocase TIM22 complex. This Saccharomyces cerevisiae (strain ATCC 204508 / S288c) (Baker's yeast) protein is Mitochondrial inner membrane protein SHH3.